Consider the following 86-residue polypeptide: Exodeoxyribonuclease 7 small subunit (86 aa).

Belongs to the XseB family. As to quaternary structure, heterooligomer composed of large and small subunits.

Its subcellular location is the cytoplasm. The enzyme catalyses Exonucleolytic cleavage in either 5'- to 3'- or 3'- to 5'-direction to yield nucleoside 5'-phosphates.. In terms of biological role, bidirectionally degrades single-stranded DNA into large acid-insoluble oligonucleotides, which are then degraded further into small acid-soluble oligonucleotides. The protein is Exodeoxyribonuclease 7 small subunit of Agrobacterium fabrum (strain C58 / ATCC 33970) (Agrobacterium tumefaciens (strain C58)).